We begin with the raw amino-acid sequence, 153 residues long: Endoribonuclease YbeY (153 aa).

Residues His114, His118, and His124 each contribute to the Zn(2+) site.

Belongs to the endoribonuclease YbeY family. Zn(2+) is required as a cofactor.

It localises to the cytoplasm. Functionally, single strand-specific metallo-endoribonuclease involved in late-stage 70S ribosome quality control and in maturation of the 3' terminus of the 16S rRNA. In Finegoldia magna (strain ATCC 29328 / DSM 20472 / WAL 2508) (Peptostreptococcus magnus), this protein is Endoribonuclease YbeY.